Consider the following 122-residue polypeptide: Small ribosomal subunit protein uS13 (122 aa).

Residues 95–122 are disordered; the sequence is GLPVRGQRTRTNARTRKGPRKTVAKKKK.

The protein belongs to the universal ribosomal protein uS13 family. In terms of assembly, part of the 30S ribosomal subunit. Forms a loose heterodimer with protein S19. Forms two bridges to the 50S subunit in the 70S ribosome.

Located at the top of the head of the 30S subunit, it contacts several helices of the 16S rRNA. In the 70S ribosome it contacts the 23S rRNA (bridge B1a) and protein L5 of the 50S subunit (bridge B1b), connecting the 2 subunits; these bridges are implicated in subunit movement. Contacts the tRNAs in the A and P-sites. This Thermoanaerobacter pseudethanolicus (strain ATCC 33223 / 39E) (Clostridium thermohydrosulfuricum) protein is Small ribosomal subunit protein uS13.